A 635-amino-acid polypeptide reads, in one-letter code: 4-hydroxy-3-methylbut-2-enyl diphosphate reductase (635 aa).

The interval 1–279 is 4-hydroxy-3-methylbut-2-enyl diphosphate reductase; the sequence is MSIILAKKSG…KEAIFKMSNK (279 aa). Cys-12 contributes to the [4Fe-4S] cluster binding site. The (2E)-4-hydroxy-3-methylbut-2-enyl diphosphate site is built by His-42 and His-77. Dimethylallyl diphosphate contacts are provided by His-42 and His-77. Residues His-42 and His-77 each contribute to the isopentenyl diphosphate site. Cys-99 contributes to the [4Fe-4S] cluster binding site. His-127 serves as a coordination point for (2E)-4-hydroxy-3-methylbut-2-enyl diphosphate. His-127 lines the dimethylallyl diphosphate pocket. Residue His-127 participates in isopentenyl diphosphate binding. The Proton donor role is filled by Glu-129. A (2E)-4-hydroxy-3-methylbut-2-enyl diphosphate-binding site is contributed by Thr-163. Residue Cys-191 participates in [4Fe-4S] cluster binding. The (2E)-4-hydroxy-3-methylbut-2-enyl diphosphate site is built by Ser-219, Ser-220, Asn-221, and Ser-263. Dimethylallyl diphosphate contacts are provided by Ser-219, Ser-220, Asn-221, and Ser-263. Positions 219, 220, 221, and 263 each coordinate isopentenyl diphosphate. S1 motif domains lie at 298–373, 380–455, 476–544, and 561–630; these read GQEV…LNRE, KEAF…ASRR, DTIK…LSIK, and GNIV…LSIK.

The protein in the N-terminal section; belongs to the IspH family. Requires [4Fe-4S] cluster as cofactor.

The catalysed reaction is isopentenyl diphosphate + 2 oxidized [2Fe-2S]-[ferredoxin] + H2O = (2E)-4-hydroxy-3-methylbut-2-enyl diphosphate + 2 reduced [2Fe-2S]-[ferredoxin] + 2 H(+). It catalyses the reaction dimethylallyl diphosphate + 2 oxidized [2Fe-2S]-[ferredoxin] + H2O = (2E)-4-hydroxy-3-methylbut-2-enyl diphosphate + 2 reduced [2Fe-2S]-[ferredoxin] + 2 H(+). The protein operates within isoprenoid biosynthesis; dimethylallyl diphosphate biosynthesis; dimethylallyl diphosphate from (2E)-4-hydroxy-3-methylbutenyl diphosphate: step 1/1. It functions in the pathway isoprenoid biosynthesis; isopentenyl diphosphate biosynthesis via DXP pathway; isopentenyl diphosphate from 1-deoxy-D-xylulose 5-phosphate: step 6/6. In terms of biological role, catalyzes the conversion of 1-hydroxy-2-methyl-2-(E)-butenyl 4-diphosphate (HMBPP) into a mixture of isopentenyl diphosphate (IPP) and dimethylallyl diphosphate (DMAPP). Acts in the terminal step of the DOXP/MEP pathway for isoprenoid precursor biosynthesis. The polypeptide is 4-hydroxy-3-methylbut-2-enyl diphosphate reductase (Clostridium tetani (strain Massachusetts / E88)).